We begin with the raw amino-acid sequence, 507 residues long: Probable Xaa-Pro aminopeptidase HCBG_01484 (507 aa).

Residues D283, D294, E431, and E469 each contribute to the Mn(2+) site.

Belongs to the peptidase M24B family. The cofactor is Mn(2+).

It catalyses the reaction Release of any N-terminal amino acid, including proline, that is linked to proline, even from a dipeptide or tripeptide.. Functionally, catalyzes the removal of a penultimate prolyl residue from the N-termini of peptides. This is Probable Xaa-Pro aminopeptidase HCBG_01484 from Ajellomyces capsulatus (strain G186AR / H82 / ATCC MYA-2454 / RMSCC 2432) (Darling's disease fungus).